The following is a 161-amino-acid chain: Large ribosomal subunit protein uL15 (161 aa).

The segment covering 1–10 has biased composition (basic and acidic residues); the sequence is MKLNELRDNP. The tract at residues 1-42 is disordered; sequence MKLNELRDNPGARPKSKRLGRGIGSGKGKTSGKGVKGQKARE. Residues 21-35 show a composition bias toward gly residues; sequence RGIGSGKGKTSGKGV.

Belongs to the universal ribosomal protein uL15 family. As to quaternary structure, part of the 50S ribosomal subunit.

In terms of biological role, binds to the 23S rRNA. In Acidiphilium cryptum (strain JF-5), this protein is Large ribosomal subunit protein uL15.